We begin with the raw amino-acid sequence, 75 residues long: Small ribosomal subunit protein bS21A (75 aa).

This sequence belongs to the bacterial ribosomal protein bS21 family.

This is Small ribosomal subunit protein bS21A (rpsU1) from Agrobacterium fabrum (strain C58 / ATCC 33970) (Agrobacterium tumefaciens (strain C58)).